Reading from the N-terminus, the 261-residue chain is Protein FAM78B (261 aa).

The protein belongs to the FAM78 family.

This Homo sapiens (Human) protein is Protein FAM78B (FAM78B).